The chain runs to 185 residues: uncharacterized protein (185 aa).

The G domain occupies 17-137 (GKSSIMNALF…QKPIIVVINK (121 aa)).

This is an uncharacterized protein from Methanocaldococcus jannaschii (strain ATCC 43067 / DSM 2661 / JAL-1 / JCM 10045 / NBRC 100440) (Methanococcus jannaschii).